Consider the following 127-residue polypeptide: Small ribosomal subunit protein eS6 (127 aa).

The protein belongs to the eukaryotic ribosomal protein eS6 family.

This chain is Small ribosomal subunit protein eS6, found in Picrophilus torridus (strain ATCC 700027 / DSM 9790 / JCM 10055 / NBRC 100828 / KAW 2/3).